Here is a 291-residue protein sequence, read N- to C-terminus: Protease HtpX homolog (291 aa).

Helical transmembrane passes span 11–31 (INTF…GLLA) and 34–54 (FLGM…ACVQ). Histidine 140 contributes to the Zn(2+) binding site. The active site involves glutamate 141. Histidine 144 is a Zn(2+) binding site. A run of 2 helical transmembrane segments spans residues 155 to 175 (IVFG…RALI) and 186 to 206 (AFSF…AMLV). A Zn(2+)-binding site is contributed by glutamate 215.

This sequence belongs to the peptidase M48B family. It depends on Zn(2+) as a cofactor.

It localises to the cell membrane. This Tropheryma whipplei (strain TW08/27) (Whipple's bacillus) protein is Protease HtpX homolog.